We begin with the raw amino-acid sequence, 435 residues long: Adenylosuccinate synthetase (435 aa).

Residues G17 to K23 and G47 to T49 each bind GTP. The Proton acceptor role is filled by D18. Mg(2+) contacts are provided by D18 and G47. Residues D18 to K21, N45 to H48, T138, R152, N232, T247, and R311 each bind IMP. Catalysis depends on H48, which acts as the Proton donor. Residue V307–R313 participates in substrate binding. GTP-binding positions include R313, K339–D341, and G421–G423.

This sequence belongs to the adenylosuccinate synthetase family. As to quaternary structure, homodimer. Requires Mg(2+) as cofactor.

Its subcellular location is the cytoplasm. It carries out the reaction IMP + L-aspartate + GTP = N(6)-(1,2-dicarboxyethyl)-AMP + GDP + phosphate + 2 H(+). It functions in the pathway purine metabolism; AMP biosynthesis via de novo pathway; AMP from IMP: step 1/2. Its function is as follows. Plays an important role in the de novo pathway and in the salvage pathway of purine nucleotide biosynthesis. Catalyzes the first committed step in the biosynthesis of AMP from IMP. The polypeptide is Adenylosuccinate synthetase (Caenorhabditis briggsae).